Here is a 333-residue protein sequence, read N- to C-terminus: BRISC and BRCA1-A complex member 1 (333 aa).

The residue at position 1 (methionine 1) is an N-acetylmethionine. The disordered stretch occupies residues 1-85 (MEVAEANSPT…PWQVPASASE (85 aa)). Residue serine 8 is modified to Phosphoserine. The segment covering 10–24 (TEEEEEEEEEGEETI) has biased composition (acidic residues). 2 positions are modified to phosphoserine: serine 33 and serine 53. The segment covering 58–67 (EAATADGGAA) has biased composition (low complexity). A VWFA-like region spans residues 99–302 (VIICLDLSEE…LELHNCMAKL (204 aa)).

It belongs to the BABAM1 family. As to quaternary structure, component of the ARISC complex, at least composed of UIMC1/RAP80, ABRAXAS1, BRCC3/BRCC36, BABAM2 and BABAM1/NBA1. Component of the BRCA1-A complex, at least composed of BRCA1, BARD1, UIMC1/RAP80, ABRAXAS1, BRCC3/BRCC36, BABAM2 and BABAM1/NBA1. In the BRCA1-A complex, interacts directly with ABRAXAS1 and BABAM2. Component of the BRISC complex, at least composed of ABRAXAS2, BRCC3/BRCC36, BABAM2 and BABAM1/NBA1. Identified in a complex with SHMT2 and the other subunits of the BRISC complex.

It localises to the cytoplasm. Its subcellular location is the nucleus. In terms of biological role, component of the BRCA1-A complex, a complex that specifically recognizes 'Lys-63'-linked ubiquitinated histones H2A and H2AX at DNA lesions sites, leading to target the BRCA1-BARD1 heterodimer to sites of DNA damage at double-strand breaks (DSBs). The BRCA1-A complex also possesses deubiquitinase activity that specifically removes 'Lys-63'-linked ubiquitin on histones H2A and H2AX. In the BRCA1-A complex, it is required for the complex integrity and its localization at DSBs. Component of the BRISC complex, a multiprotein complex that specifically cleaves 'Lys-63'-linked ubiquitin in various substrates. In these 2 complexes, it is probably required to maintain the stability of BABAM2 and help the 'Lys-63'-linked deubiquitinase activity mediated by BRCC3/BRCC36 component. The BRISC complex is required for normal mitotic spindle assembly and microtubule attachment to kinetochores via its role in deubiquitinating NUMA1. Plays a role in interferon signaling via its role in the deubiquitination of the interferon receptor IFNAR1; deubiquitination increases IFNAR1 activity by enhancing its stability and cell surface expression. Down-regulates the response to bacterial lipopolysaccharide (LPS) via its role in IFNAR1 deubiquitination. The polypeptide is BRISC and BRCA1-A complex member 1 (Babam1) (Mus musculus (Mouse)).